Consider the following 506-residue polypeptide: Ribose import ATP-binding protein RbsA 1 (506 aa).

ABC transporter domains lie at L5–R241 and R254–A498. G37–S44 provides a ligand contact to ATP.

It belongs to the ABC transporter superfamily. Ribose importer (TC 3.A.1.2.1) family. The complex is composed of an ATP-binding protein (RbsA), two transmembrane proteins (RbsC) and a solute-binding protein (RbsB).

The protein resides in the cell inner membrane. It carries out the reaction D-ribose(out) + ATP + H2O = D-ribose(in) + ADP + phosphate + H(+). Part of the ABC transporter complex RbsABC involved in ribose import. Responsible for energy coupling to the transport system. In Burkholderia thailandensis (strain ATCC 700388 / DSM 13276 / CCUG 48851 / CIP 106301 / E264), this protein is Ribose import ATP-binding protein RbsA 1.